Consider the following 208-residue polypeptide: Small ribosomal subunit protein eS8 (208 aa).

Residues 1–27 (MGISRDNWHKRRKTGGKRKPYHKKRKY) form a disordered region. Residue Gly2 is the site of N-myristoyl glycine attachment. A compositionally biased stretch (basic residues) spans 8–26 (WHKRRKTGGKRKPYHKKRK). 2 positions are modified to N6-acetyllysine: Lys37 and Lys128. A Phosphothreonine modification is found at Thr130. Ser160 is modified (phosphoserine). Glycyl lysine isopeptide (Lys-Gly) (interchain with G-Cter in SUMO2) cross-links involve residues Lys170 and Lys193.

Belongs to the eukaryotic ribosomal protein eS8 family. In terms of assembly, component of the small ribosomal subunit. Identified in a IGF2BP1-dependent mRNP granule complex containing untranslated mRNAs. Part of the small subunit (SSU) processome, composed of more than 70 proteins and the RNA chaperone small nucleolar RNA (snoRNA) U3.

It is found in the cytoplasm. The protein resides in the membrane. The protein localises to the nucleus. Its subcellular location is the nucleolus. Functionally, component of the small ribosomal subunit. The ribosome is a large ribonucleoprotein complex responsible for the synthesis of proteins in the cell. Part of the small subunit (SSU) processome, first precursor of the small eukaryotic ribosomal subunit. During the assembly of the SSU processome in the nucleolus, many ribosome biogenesis factors, an RNA chaperone and ribosomal proteins associate with the nascent pre-rRNA and work in concert to generate RNA folding, modifications, rearrangements and cleavage as well as targeted degradation of pre-ribosomal RNA by the RNA exosome. The protein is Small ribosomal subunit protein eS8 (Rps8) of Mus musculus (Mouse).